Here is a 311-residue protein sequence, read N- to C-terminus: Ornithine carbamoyltransferase (311 aa).

Residues 52–55 (STRT), Gln-79, Arg-103, and 129–132 (HPVQ) contribute to the carbamoyl phosphate site. L-ornithine is bound by residues Asn-167, Asp-226, and 230-231 (SM). Residues 266–267 (CL) and Arg-294 contribute to the carbamoyl phosphate site.

Belongs to the aspartate/ornithine carbamoyltransferase superfamily. OTCase family.

It localises to the cytoplasm. The catalysed reaction is carbamoyl phosphate + L-ornithine = L-citrulline + phosphate + H(+). The protein operates within amino-acid biosynthesis; L-arginine biosynthesis; L-arginine from L-ornithine and carbamoyl phosphate: step 1/3. Its function is as follows. Reversibly catalyzes the transfer of the carbamoyl group from carbamoyl phosphate (CP) to the N(epsilon) atom of ornithine (ORN) to produce L-citrulline. The polypeptide is Ornithine carbamoyltransferase (Sorangium cellulosum (strain So ce56) (Polyangium cellulosum (strain So ce56))).